Here is a 123-residue protein sequence, read N- to C-terminus: Small ribosomal subunit protein uS13c (123 aa).

A disordered region spans residues 90 to 123 (GKRHRNSLPVRGQRTRTNARSRRGAKKTVTGKKK). Basic residues predominate over residues 102-123 (QRTRTNARSRRGAKKTVTGKKK).

The protein belongs to the universal ribosomal protein uS13 family. As to quaternary structure, part of the 30S ribosomal subunit.

It localises to the plastid. The protein localises to the chloroplast. In terms of biological role, located at the top of the head of the 30S subunit, it contacts several helices of the 16S rRNA. The protein is Small ribosomal subunit protein uS13c of Thalassiosira pseudonana (Marine diatom).